Reading from the N-terminus, the 471-residue chain is tRNA-2-methylthio-N(6)-dimethylallyladenosine synthase (471 aa).

The region spanning 33-151 is the MTTase N-terminal domain; the sequence is KKYMITTYGC…FPELLSRSME (119 aa). [4Fe-4S] cluster contacts are provided by C42, C78, C112, C188, C192, and C195. Residues 174-404 form the Radical SAM core domain; that stretch reads RKYDLKGFIN…LDKVNEISAE (231 aa). One can recognise a TRAM domain in the interval 407–470; it reads QSYLNKVVEV…TFSLNGEVIQ (64 aa).

The protein belongs to the methylthiotransferase family. MiaB subfamily. Monomer. The cofactor is [4Fe-4S] cluster.

The protein localises to the cytoplasm. The catalysed reaction is N(6)-dimethylallyladenosine(37) in tRNA + (sulfur carrier)-SH + AH2 + 2 S-adenosyl-L-methionine = 2-methylsulfanyl-N(6)-dimethylallyladenosine(37) in tRNA + (sulfur carrier)-H + 5'-deoxyadenosine + L-methionine + A + S-adenosyl-L-homocysteine + 2 H(+). Its function is as follows. Catalyzes the methylthiolation of N6-(dimethylallyl)adenosine (i(6)A), leading to the formation of 2-methylthio-N6-(dimethylallyl)adenosine (ms(2)i(6)A) at position 37 in tRNAs that read codons beginning with uridine. The polypeptide is tRNA-2-methylthio-N(6)-dimethylallyladenosine synthase (Alkaliphilus oremlandii (strain OhILAs) (Clostridium oremlandii (strain OhILAs))).